A 1682-amino-acid polypeptide reads, in one-letter code: Collagen alpha-4(IV) chain (1682 aa).

The signal sequence occupies residues 1–32 (MRCFFRWTKSFVTAPWSLIFILFTIQYEYGSG). Residues 31-56 (SGKKYGGPCGGRNCSVCQCFPEKGSR) form a 7S domain region. An N-linked (GlcNAc...) asparagine glycan is attached at N43. Disordered stretches follow at residues 56 to 255 (RGHP…VQPP) and 379 to 1453 (PGPP…FGPG). The triple-helical region stretch occupies residues 57–1451 (GHPGPLGPQG…TGDPGPKGFG (1395 aa)). Positions 86 to 88 (RGD) match the Cell attachment site motif. Residues 103-116 (PTGVPGFPGVDGVP) show a composition bias toward low complexity. N134 carries N-linked (GlcNAc...) asparagine glycosylation. Short sequence motifs (cell attachment site) lie at residues 137–139 (RGD) and 181–183 (RGD). The span at 396-410 (MGPPGPPGVPGPPGF) shows a compositional bias: pro residues. Residues 411–426 (PGEAGVPGRLDCAPGK) show a composition bias toward low complexity. The span at 487 to 500 (PPGPMGPPGPPGPP) shows a compositional bias: pro residues. The span at 578-601 (DGGDGRPGERGDPGPRGDHKDAAP) shows a compositional bias: basic and acidic residues. 2 short sequence motifs (cell attachment site) span residues 587–589 (RGD) and 593–595 (RGD). Residues 609-621 (LPGPPGRTGPEGP) are compositionally biased toward pro residues. The segment covering 632–647 (QRGLPGEPGRPGTRGF) has biased composition (low complexity). An N-linked (GlcNAc...) asparagine glycan is attached at N661. A compositionally biased stretch (low complexity) spans 665–682 (PGKPGLPGLDGPPGLKGF). Positions 716-718 (RGD) match the Cell attachment site motif. 2 stretches are compositionally biased toward low complexity: residues 742–758 (PGKDGQKGIPGDPAFGD) and 857–902 (PAGM…LPGL). Composition is skewed to basic and acidic residues over residues 911-929 (ERGKPGPDGEPGRKGEVGE) and 938-950 (DLGERGAKGDRGL). Residues 969-978 (GPPGDGGFSG) are compositionally biased toward gly residues. 2 consecutive short sequence motifs (cell attachment site) follow at residues 980-982 (RGD) and 992-994 (RGD). A compositionally biased stretch (low complexity) spans 998 to 1010 (DGLPGLHRGQPGI). Pro residues predominate over residues 1011–1025 (DGPPGPPGPPGPPGS). Residues 1034–1044 (FPGFPGDQGDP) show a composition bias toward low complexity. Residues 1144–1146 (RGD) carry the Cell attachment site motif. 5 stretches are compositionally biased toward pro residues: residues 1223-1235 (PGPPGRPGPPGPA), 1248-1272 (DPGPPGDRGPPGPDGPRGVPGPPGS), 1289-1304 (PGPPGSRGPPGPPGCQ), 1340-1351 (PGPPGRKGPVGP), and 1435-1444 (APGPPGPTGD). One can recognise a Collagen IV NC1 domain in the interval 1457–1682 (GFLLVLHSQT…SRCQVCMKHS (226 aa)). Intrachain disulfides connect C1472–C1561, C1505–C1558, C1517–C1523, C1580–C1678, C1614–C1675, and C1626–C1633.

The protein belongs to the type IV collagen family. There are six type IV collagen isoforms, alpha 1(IV)-alpha 6(IV), each of which can form a triple helix structure with 2 other chains to generate type IV collagen network. The alpha 3(IV) chain forms a triple helical protomer with alpha 4(IV) and alpha 5(IV); this triple helical structure dimerizes through NC1-NC1 domain interactions such that the alpha 3(IV), alpha 4(IV) and alpha 5(IV) chains of one protomer connect with the alpha 5(IV), alpha 4(IV) and alpha 3(IV) chains of the opposite protomer, respectively. Associates with LAMB2 at the neuromuscular junction and in GBM. Prolines at the third position of the tripeptide repeating unit (G-X-Y) are hydroxylated in some or all of the chains. In terms of processing, type IV collagens contain numerous cysteine residues which are involved in inter- and intramolecular disulfide bonding. 12 of these, located in the NC1 domain, are conserved in all known type IV collagens. Post-translationally, the trimeric structure of the NC1 domains is stabilized by covalent bonds between Lys and Met residues. Expressed in Bruch's membrane, outer plexiform layer, inner nuclear layer, inner plexiform layer, ganglion cell layer, inner limiting membrane and around the blood vessels of the retina (at protein level). Highly expressed in kidney and lung. Detected at lower levels in heart, muscle and skin.

Its subcellular location is the secreted. The protein localises to the extracellular space. The protein resides in the extracellular matrix. It is found in the basement membrane. Functionally, type IV collagen is the major structural component of glomerular basement membranes (GBM), forming a 'chicken-wire' meshwork together with laminins, proteoglycans and entactin/nidogen. The sequence is that of Collagen alpha-4(IV) chain from Mus musculus (Mouse).